The primary structure comprises 371 residues: Beta-1,3-galactosyltransferase 4 (371 aa).

At 1–4 (MPLS) the chain is on the cytoplasmic side. Residues 5-25 (LFRRLLLAVLLLVIIWTLFGP) form a helical; Signal-anchor for type II membrane protein membrane-spanning segment. Over 26–371 (SGLGEELLSL…RCRFIAWLNS (346 aa)) the chain is Lumenal. Asn-143 is a glycosylation site (N-linked (GlcNAc...) asparagine). Residues 187-208 (GGPSEQWQKGKEPQEETTAVHK) are disordered. The segment covering 194 to 207 (QKGKEPQEETTAVH) has biased composition (basic and acidic residues).

This sequence belongs to the glycosyltransferase 31 family. Highly expressed in thymus, spleen, kidney and testis and, to a lesser extent, in brain and liver.

Its subcellular location is the golgi apparatus membrane. The catalysed reaction is a ganglioside GM2 (d18:1(4E)) + UDP-alpha-D-galactose = a ganglioside GM1 (d18:1(4E)) + UDP + H(+). It catalyses the reaction a ganglioside GM2 + UDP-alpha-D-galactose = a ganglioside GM1 + UDP + H(+). It carries out the reaction a ganglioside GD2 (d18:1(4E)) + UDP-alpha-D-galactose = a ganglioside GD1b (d18:1(4E)) + UDP + H(+). The enzyme catalyses a ganglioside GA2 (d18:1(4E)) + UDP-alpha-D-galactose = a ganglioside GA1 (d18:1(4E)) + UDP + H(+). It functions in the pathway protein modification; protein glycosylation. In terms of biological role, involved in GM1/GD1B/GA1 ganglioside biosynthesis. This chain is Beta-1,3-galactosyltransferase 4 (B3galt4), found in Rattus norvegicus (Rat).